We begin with the raw amino-acid sequence, 300 residues long: Ribosomal RNA small subunit methyltransferase H (300 aa).

S-adenosyl-L-methionine contacts are provided by residues 36–38, D55, L89, D103, and Q110; that span reads GGH.

This sequence belongs to the methyltransferase superfamily. RsmH family.

Its subcellular location is the cytoplasm. It carries out the reaction cytidine(1402) in 16S rRNA + S-adenosyl-L-methionine = N(4)-methylcytidine(1402) in 16S rRNA + S-adenosyl-L-homocysteine + H(+). Its function is as follows. Specifically methylates the N4 position of cytidine in position 1402 (C1402) of 16S rRNA. The sequence is that of Ribosomal RNA small subunit methyltransferase H from Thermotoga neapolitana (strain ATCC 49049 / DSM 4359 / NBRC 107923 / NS-E).